Consider the following 88-residue polypeptide: UPF0367 protein syc2447_c (88 aa).

It belongs to the UPF0367 family.

The polypeptide is UPF0367 protein syc2447_c (Synechococcus sp. (strain ATCC 27144 / PCC 6301 / SAUG 1402/1) (Anacystis nidulans)).